An 887-amino-acid polypeptide reads, in one-letter code: Probable alpha/beta-glucosidase agdC (887 aa).

Residues 1–17 (MLRSLLLLAPMVGAAVA) form the signal peptide. Asn171, Asn293, and Asn373 each carry an N-linked (GlcNAc...) asparagine glycan. The active-site Nucleophile is the Asp422. Glu425 is a catalytic residue. The disordered stretch occupies residues 457–483 (PRPLPGFPDDFQPPAASKRSVAKGSKV). The active-site Proton donor is the Asp571. Asn747 and Asn879 each carry an N-linked (GlcNAc...) asparagine glycan.

Belongs to the glycosyl hydrolase 31 family.

The protein localises to the secreted. It carries out the reaction Hydrolysis of terminal, non-reducing (1-&gt;4)-linked alpha-D-glucose residues with release of alpha-D-glucose.. The enzyme catalyses Hydrolysis of terminal, non-reducing beta-D-glucosyl residues with release of beta-D-glucose.. Glucosidase involved in the degradation of cellulosic biomass. Has both alpha- and beta-glucosidase activity. This is Probable alpha/beta-glucosidase agdC (agdC) from Aspergillus clavatus (strain ATCC 1007 / CBS 513.65 / DSM 816 / NCTC 3887 / NRRL 1 / QM 1276 / 107).